We begin with the raw amino-acid sequence, 417 residues long: Actin-like protein 7B (417 aa).

The interval Met1–Gln39 is disordered. Ser8 is subject to Phosphoserine.

The protein belongs to the actin family.

The protein localises to the cytoplasm. It localises to the cytoskeleton. This chain is Actin-like protein 7B (Actl7b), found in Rattus norvegicus (Rat).